The sequence spans 515 residues: Zinc metalloproteinase-disintegrin-like EoMP06 (515 aa).

The propeptide occupies 1-94 (VEDHCYYHGR…TLGLIVPPHG (94 aa)). At Gln95 the chain carries Pyrrolidone carboxylic acid. In terms of domain architecture, Peptidase M12B spans 100–296 (KFIELIIVVD…YNPKCIVDPP (197 aa)). Position 103 (Glu103) interacts with Ca(2+). Residue Asn160 is glycosylated (N-linked (GlcNAc...) asparagine). Asp187 serves as a coordination point for Ca(2+). 2 N-linked (GlcNAc...) asparagine glycosylation sites follow: Asn194 and Asn225. 3 cysteine pairs are disulfide-bonded: Cys211–Cys291, Cys251–Cys275, and Cys253–Cys258. Zn(2+) is bound at residue His236. Residue Glu237 is part of the active site. Positions 240 and 246 each coordinate Zn(2+). Cys291, Val306, Asn309, Val311, Glu313, Glu316, and Asp319 together coordinate Ca(2+). Residues 304-390 (PAVCGNGVWE…ECPRNEFQRN (87 aa)) enclose the Disintegrin domain. Disulfide bonds link Cys307–Cys336, Cys318–Cys331, Cys320–Cys326, Cys330–Cys353, Cys344–Cys350, Cys349–Cys375, Cys362–Cys382, Cys369–Cys401, Cys394–Cys406, Cys413–Cys466, Cys428–Cys477, Cys441–Cys454, Cys461–Cys503, and Cys497–Cys508. The D/ECD-tripeptide motif lies at 368 to 370 (DCD). Residues Asp370, Val371, and Asn385 each coordinate Ca(2+).

The protein belongs to the venom metalloproteinase (M12B) family. P-III subfamily. P-IIIa sub-subfamily. Monomer. It depends on Zn(2+) as a cofactor. As to expression, expressed by the venom gland.

Its subcellular location is the secreted. In terms of biological role, snake venom zinc metalloproteinase that catalyzes the conversion of prothrombin (F2) to alpha-thrombin through formation of a thrombin intermediate, thereby functioning as a procoagulant protein. In Echis ocellatus (Ocellated saw-scaled viper), this protein is Zinc metalloproteinase-disintegrin-like EoMP06.